The primary structure comprises 519 residues: Laccase-2 (519 aa).

Residues 1–20 (MGLQRFSFFVTLALVARSLA) form the signal peptide. 2 Plastocyanin-like domains span residues 22–147 (IGPV…FVVY) and 159–301 (VDNE…ILRY). Asparagine 74 is a glycosylation site (N-linked (GlcNAc...) asparagine). Cu cation-binding residues include histidine 84, histidine 86, histidine 129, and histidine 131. 2 cysteine pairs are disulfide-bonded: cysteine 105/cysteine 508 and cysteine 137/cysteine 225. N-linked (GlcNAc...) asparagine glycans are attached at residues asparagine 161, asparagine 228, asparagine 237, asparagine 271, asparagine 353, and asparagine 361. The 123-residue stretch at 368-490 (TVPVLLQILS…AGFAIVFAED (123 aa)) folds into the Plastocyanin-like 3 domain. Residues histidine 415, histidine 418, histidine 420, histidine 472, cysteine 473, histidine 474, and histidine 478 each coordinate Cu cation.

Belongs to the multicopper oxidase family. Homodimer. Requires Cu cation as cofactor.

The protein localises to the secreted. It carries out the reaction 4 hydroquinone + O2 = 4 benzosemiquinone + 2 H2O. Lignin degradation and detoxification of lignin-derived products. The polypeptide is Laccase-2 (Trametes villosa (White-rot fungus)).